A 248-amino-acid chain; its full sequence is Probable phosphatase VFMJ11_A0899 (248 aa).

Residues His8, His10, His16, His41, Glu74, His101, His131, Asp193, and His195 each coordinate Zn(2+).

This sequence belongs to the PHP family. The cofactor is Zn(2+).

In Aliivibrio fischeri (strain MJ11) (Vibrio fischeri), this protein is Probable phosphatase VFMJ11_A0899.